Reading from the N-terminus, the 212-residue chain is 3-isopropylmalate dehydratase small subunit (212 aa).

Belongs to the LeuD family. LeuD type 1 subfamily. As to quaternary structure, heterodimer of LeuC and LeuD.

The catalysed reaction is (2R,3S)-3-isopropylmalate = (2S)-2-isopropylmalate. It functions in the pathway amino-acid biosynthesis; L-leucine biosynthesis; L-leucine from 3-methyl-2-oxobutanoate: step 2/4. In terms of biological role, catalyzes the isomerization between 2-isopropylmalate and 3-isopropylmalate, via the formation of 2-isopropylmaleate. In Thiobacillus denitrificans (strain ATCC 25259 / T1), this protein is 3-isopropylmalate dehydratase small subunit.